A 101-amino-acid polypeptide reads, in one-letter code: MMLEHILVLSAYLFSIGIYGLITSRNMVRALMCLELIFNSVNINFVTFSGFFDNRQLRGDIFSVFVFAIAAAEAAIGLAIVSSIYRNRKSTRINQSNLLNK.

The next 3 membrane-spanning stretches (helical) occupy residues 2 to 22, 32 to 52, and 61 to 81; these read MLEH…YGLI, MCLE…SGFF, and IFSV…LAIV.

Belongs to the complex I subunit 4L family. As to quaternary structure, NDH is composed of at least 16 different subunits, 5 of which are encoded in the nucleus.

Its subcellular location is the plastid. It is found in the chloroplast thylakoid membrane. It catalyses the reaction a plastoquinone + NADH + (n+1) H(+)(in) = a plastoquinol + NAD(+) + n H(+)(out). It carries out the reaction a plastoquinone + NADPH + (n+1) H(+)(in) = a plastoquinol + NADP(+) + n H(+)(out). NDH shuttles electrons from NAD(P)H:plastoquinone, via FMN and iron-sulfur (Fe-S) centers, to quinones in the photosynthetic chain and possibly in a chloroplast respiratory chain. The immediate electron acceptor for the enzyme in this species is believed to be plastoquinone. Couples the redox reaction to proton translocation, and thus conserves the redox energy in a proton gradient. The chain is NAD(P)H-quinone oxidoreductase subunit 4L, chloroplastic from Jasminum nudiflorum (Winter jasmine).